Consider the following 73-residue polypeptide: uncharacterized protein (73 aa).

This is an uncharacterized protein from Treponema pallidum (strain Nichols).